The sequence spans 433 residues: Succinate--CoA ligase [GDP-forming] subunit beta, mitochondrial (433 aa).

A mitochondrion-targeting transit peptide spans 1–38 (IPAAPVAAQARKLLRDLAFRPPLLAARSQVVQLTPRRW). The 229-residue stretch at 47 to 275 (KKLMSDNGVK…NAEFRQKDIF (229 aa)) folds into the ATP-grasp domain. Position 58 (Gln-58) interacts with GTP. N6-acetyllysine is present on Lys-74. Lys-79 carries the N6-succinyllysine modification. 91–93 (GRG) is a GTP binding site. An N6-acetyllysine mark is found at Lys-133 and Lys-140. Leu-147 contacts GTP. Ser-162 is subject to Phosphoserine. Residues Lys-201 and Lys-228 each carry the N6-acetyllysine modification. Residues Asn-244 and Asp-258 each contribute to the Mg(2+) site. 2 positions are modified to N6-acetyllysine: Lys-272 and Lys-292. Asn-309 serves as a coordination point for substrate. Lys-339 is modified (N6-succinyllysine). Position 348 is an N6-acetyllysine (Lys-348). 366-368 (GIV) is a binding site for substrate. N6-acetyllysine is present on residues Lys-387 and Lys-424.

The protein belongs to the succinate/malate CoA ligase beta subunit family. GTP-specific subunit beta subfamily. As to quaternary structure, heterodimer of an alpha and a beta subunit. The beta subunit determines specificity for GTP. Mg(2+) serves as cofactor.

It is found in the mitochondrion. It carries out the reaction GTP + succinate + CoA = succinyl-CoA + GDP + phosphate. It functions in the pathway carbohydrate metabolism; tricarboxylic acid cycle; succinate from succinyl-CoA (ligase route): step 1/1. Its function is as follows. GTP-specific succinyl-CoA synthetase functions in the citric acid cycle (TCA), coupling the hydrolysis of succinyl-CoA to the synthesis of GTP and thus represents the only step of substrate-level phosphorylation in the TCA. The beta subunit provides nucleotide specificity of the enzyme and binds the substrate succinate, while the binding sites for coenzyme A and phosphate are found in the alpha subunit. The sequence is that of Succinate--CoA ligase [GDP-forming] subunit beta, mitochondrial from Sus scrofa (Pig).